The following is a 680-amino-acid chain: Galactose oxidase (680 aa).

Residues 1–24 form the signal peptide; the sequence is MKHLLTLALCFSSINAVAVTVPHK. The propeptide occupies 25 to 41; sequence AVGTGIPEGSLQFLSLR. Positions 42 to 189 constitute an F5/8 type C domain; it reads ASAPIGSAIS…SIAEINVFQA (148 aa). A disulfide bridge connects residues Cys-59 and Cys-68. Kelch repeat units follow at residues 223–268, 279–321, 323–372, 436–490, and 492–544; these read RVLM…HDMF, QIVV…TMSD, RVFT…LYRS, KILT…VLPD, and STFI…LLLP. The 3'-(S-cysteinyl)-tyrosine (Cys-Tyr) cross-link spans 269–313; it reads CPGISMDGNGQIVVTGGNDAKKTSLYDSSSDSWIPGPDMQVARGY. Residue Tyr-313 coordinates Cu cation. Cu cation-binding residues include Tyr-536 and His-537. Tyr-536 (proton acceptor) is an active-site residue. Cys-556 and Cys-559 are disulfide-bonded. His-622 contributes to the Cu cation binding site.

Monomer. The cofactor is Cu(2+). In terms of processing, galactose oxidase contains a protein-derived free radical cofactor. In the active state, Tyr-313, which is cross-linked to Cys-269 via a thioether bond, is oxidized to a radical and acts with Cu(2+) as a two-electron acceptor in the oxidation reaction. The cross-link is believed to modulate the redox potential of the tyrosyl radical, which is further stabilized by a stacking interaction with Trp-331 in the active site. The post-translational formation of the cross-link is closely linked to the propeptide cleavage event, and both are copper-dependent, autocatalytic processes. The propeptide may act as an intramolecular chaperone, facilitating thioester bond formation and copper binding by positioning of active-site residues, including copper ligands.

It is found in the secreted. It carries out the reaction D-galactose + O2 = D-galacto-hexodialdose + H2O2. Its activity is regulated as follows. Inhibited by diethyldithiocarbamate. Catalyzes the sterospecific oxidation of primary alcohols to the corresponding aldehydes. The biologically relevant substrate of the enzyme is not known as the enzyme exhibits broad substrate specificity from small alcohols through sugars to oligo- and polysaccharides. The protein is Galactose oxidase (GAOA) of Gibberella zeae (Wheat head blight fungus).